A 435-amino-acid polypeptide reads, in one-letter code: Monodehydroascorbate reductase 3, cytosolic (435 aa).

Residues 14–17 (GGVA), Glu-41, Arg-48, Lys-53, Ile-96, and 147–148 (RE) each bind FAD. Residues 172 to 178 (GGYIGLE), Glu-196, Arg-202, and Gly-261 each bind NAD(+). 174–178 (YIGLE) is a binding site for NADP(+). The NADP(+) site is built by Arg-202 and Gly-261. Asp-298 contacts FAD. 314–315 (EH) contributes to the NAD(+) binding site. 314-315 (EH) is an NADP(+) binding site. Val-316 is a binding site for FAD. Arg-320 contributes to the L-ascorbate binding site. An FAD-binding site is contributed by Tyr-349. Tyr-349 contacts NAD(+). Residue Tyr-349 coordinates NADP(+). Arg-351 is an L-ascorbate binding site.

This sequence belongs to the FAD-dependent oxidoreductase family. It depends on FAD as a cofactor.

It is found in the cytoplasm. The enzyme catalyses 2 monodehydro-L-ascorbate radical + NADH + H(+) = 2 L-ascorbate + NAD(+). Functionally, catalyzes the conversion of monodehydroascorbate to ascorbate, oxidizing NADH in the process. Ascorbate is a major antioxidant against reactive oxygen species (ROS) and nitric oxide (NO). Can use NADPH as electron donor, but possesses lower activity compared to NADH as electron donor. The protein is Monodehydroascorbate reductase 3, cytosolic of Oryza sativa subsp. japonica (Rice).